A 432-amino-acid chain; its full sequence is Glutamate-1-semialdehyde 2,1-aminomutase (432 aa).

The residue at position 271 (K271) is an N6-(pyridoxal phosphate)lysine.

The protein belongs to the class-III pyridoxal-phosphate-dependent aminotransferase family. HemL subfamily. In terms of assembly, homodimer. Pyridoxal 5'-phosphate is required as a cofactor.

The protein resides in the cytoplasm. The enzyme catalyses (S)-4-amino-5-oxopentanoate = 5-aminolevulinate. It functions in the pathway porphyrin-containing compound metabolism; protoporphyrin-IX biosynthesis; 5-aminolevulinate from L-glutamyl-tRNA(Glu): step 2/2. The protein operates within porphyrin-containing compound metabolism; chlorophyll biosynthesis. The polypeptide is Glutamate-1-semialdehyde 2,1-aminomutase (Prochlorococcus marinus (strain MIT 9211)).